The sequence spans 291 residues: Pirin-like protein (291 aa).

It belongs to the pirin family.

Its subcellular location is the nucleus. This chain is Pirin-like protein, found in Solanum lycopersicum (Tomato).